A 244-amino-acid chain; its full sequence is MDRRFTVFLVIALVTSIYEVLSNGNLNDGDDSFKQFDELEENPAHKYSKEAQKGFEMEEEEVTIREPSGTKESFKLPINMPPVKFSFCVSCGYRQAYEQFAQILREKYPGIDIHGENYPPGILRTVGAQVIGMVKIALIVCVVSGRSPFPTLGLETPTFFQWMLSNRLSAALMLFLFSNAIEGMLQSTGAFEIYIESERIWSKLESGRVPSPPELFQAIDSHLAIRRGGAGRFGSSSSFGIDGS.

Positions 1 to 22 (MDRRFTVFLVIALVTSIYEVLS) are cleaved as a signal peptide. The cysteines at positions 88 and 91 are disulfide-linked.

This sequence belongs to the SelWTH family. SELT subfamily.

The protein is Putative esophageal gland cell secretory protein 6 (HSP6) of Heterodera glycines (Soybean cyst nematode worm).